We begin with the raw amino-acid sequence, 158 residues long: Xanthine-guanine phosphoribosyltransferase (158 aa).

Residues 38–39 and 90–98 contribute to the 5-phospho-alpha-D-ribose 1-diphosphate site; these read RG and DDLVDTGGT. D91 serves as a coordination point for Mg(2+). D94 and I137 together coordinate guanine. D94 and I137 together coordinate xanthine. GMP contacts are provided by residues 94-98 and 136-137; these read DTGGT and WI.

Belongs to the purine/pyrimidine phosphoribosyltransferase family. XGPT subfamily. As to quaternary structure, homotetramer. Requires Mg(2+) as cofactor.

Its subcellular location is the cell inner membrane. The catalysed reaction is GMP + diphosphate = guanine + 5-phospho-alpha-D-ribose 1-diphosphate. It carries out the reaction XMP + diphosphate = xanthine + 5-phospho-alpha-D-ribose 1-diphosphate. The enzyme catalyses IMP + diphosphate = hypoxanthine + 5-phospho-alpha-D-ribose 1-diphosphate. It functions in the pathway purine metabolism; GMP biosynthesis via salvage pathway; GMP from guanine: step 1/1. The protein operates within purine metabolism; XMP biosynthesis via salvage pathway; XMP from xanthine: step 1/1. Purine salvage pathway enzyme that catalyzes the transfer of the ribosyl-5-phosphate group from 5-phospho-alpha-D-ribose 1-diphosphate (PRPP) to the N9 position of the 6-oxopurines guanine and xanthine to form the corresponding ribonucleotides GMP (guanosine 5'-monophosphate) and XMP (xanthosine 5'-monophosphate), with the release of PPi. To a lesser extent, also acts on hypoxanthine. The polypeptide is Xanthine-guanine phosphoribosyltransferase (Buchnera aphidicola subsp. Acyrthosiphon pisum (strain APS) (Acyrthosiphon pisum symbiotic bacterium)).